Reading from the N-terminus, the 320-residue chain is MGSFDLQSITSEPVLLLGLAAFALLLTALPWCFWAVSNGRSSSGVRSLLGLSNLLLTAQLVLRWWQSGHFPISNLYESLCFLAWACTLTQLLVERQWPSPLVAASATPMGLGCIAFASFALPDQLQQASPLVPALRSSWLVMHVSVIMVSYAALLVGSLLSVAVLMTDRGQQLELRSSSIGSGAFRKAVSITGETSAVGVQAAPELQLSSIDFSRSEQLDSLSYRTITVGFLLLTVGIISGAVWANEAWGSWWSWDPKETWALICWLVYAAYLHTRLSRGWQGRRPAMVASLGLVVIVVCYIGVNLLGIGLHSYGWFFDA.

7 consecutive transmembrane segments (helical) span residues V14–W34, G68–L88, L101–L121, V146–M166, T226–N246, T260–L277, and V289–I309.

Belongs to the CcmF/CycK/Ccl1/NrfE/CcsA family. As to quaternary structure, may interact with ccs1.

Its subcellular location is the cellular thylakoid membrane. Functionally, required during biogenesis of c-type cytochromes (cytochrome c6 and cytochrome f) at the step of heme attachment. This is Cytochrome c biogenesis protein CcsA from Synechococcus sp. (strain WH7803).